The chain runs to 324 residues: Mevalonate-3-kinase (324 aa).

Leu19 contributes to the substrate binding site. 109–112 (SGSS) is a binding site for ATP. Residues Glu145 and Arg149 each coordinate substrate. ATP-binding residues include Arg190 and Ser193.

This sequence belongs to the GHMP kinase family. Homodimer.

The catalysed reaction is (R)-mevalonate + ATP = (R)-3-phosphomevalonate + ADP + H(+). It functions in the pathway isoprenoid biosynthesis; isopentenyl diphosphate biosynthesis via mevalonate pathway. In terms of biological role, catalyzes the phosphorylation of mevalonate (MVA) to yield mevalonate-3-phosphate. Functions in an alternative mevalonate pathway, which passes through mevalonate 3-phosphate rather than mevalonate 5-phosphate. Also able to catalyze the formation of isobutene via the conversion of 3-hydroxyisovalerate (3-HIV) to an unstable 3-phosphate intermediate that undergoes a spontaneous decarboxylation. This is Mevalonate-3-kinase from Picrophilus torridus (strain ATCC 700027 / DSM 9790 / JCM 10055 / NBRC 100828 / KAW 2/3).